A 100-amino-acid polypeptide reads, in one-letter code: MATMTKKKLISTISQDHKIHPNHVRTVIQNFLDKMTDALVQGDRLEFRDFGVLQVVERKPKVGRNPKNAAVPIHIPARRAVKFTPGKRMKRLIETPTKSS.

This sequence belongs to the bacterial histone-like protein family.

Histone-like DNA-binding protein which is capable of wrapping DNA to stabilize it, and thus to prevent its denaturation under extreme environmental conditions. The protein is Probable DNA-binding protein HU (hup) of Chlamydia muridarum (strain MoPn / Nigg).